A 196-amino-acid chain; its full sequence is Protein GrpE (196 aa).

Residues Met1 to Asp41 are disordered.

The protein belongs to the GrpE family. In terms of assembly, homodimer.

The protein resides in the cytoplasm. Participates actively in the response to hyperosmotic and heat shock by preventing the aggregation of stress-denatured proteins, in association with DnaK and GrpE. It is the nucleotide exchange factor for DnaK and may function as a thermosensor. Unfolded proteins bind initially to DnaJ; upon interaction with the DnaJ-bound protein, DnaK hydrolyzes its bound ATP, resulting in the formation of a stable complex. GrpE releases ADP from DnaK; ATP binding to DnaK triggers the release of the substrate protein, thus completing the reaction cycle. Several rounds of ATP-dependent interactions between DnaJ, DnaK and GrpE are required for fully efficient folding. This is Protein GrpE from Klebsiella pneumoniae (strain 342).